Consider the following 357-residue polypeptide: Aspartate carbamoyltransferase catalytic subunit (357 aa).

The span at 1 to 17 (MSNSIDSQSIPTISPTD) shows a compositional bias: polar residues. A disordered region spans residues 1–21 (MSNSIDSQSIPTISPTDYTKF). Carbamoyl phosphate contacts are provided by Arg97 and Thr98. L-aspartate is bound at residue Lys125. Residues Arg147, His177, and Gln180 each contribute to the carbamoyl phosphate site. L-aspartate is bound by residues Arg211 and Arg266. Carbamoyl phosphate-binding residues include Gly307 and Pro308.

This sequence belongs to the aspartate/ornithine carbamoyltransferase superfamily. ATCase family. As to quaternary structure, heterododecamer (2C3:3R2) of six catalytic PyrB chains organized as two trimers (C3), and six regulatory PyrI chains organized as three dimers (R2).

The catalysed reaction is carbamoyl phosphate + L-aspartate = N-carbamoyl-L-aspartate + phosphate + H(+). It participates in pyrimidine metabolism; UMP biosynthesis via de novo pathway; (S)-dihydroorotate from bicarbonate: step 2/3. In terms of biological role, catalyzes the condensation of carbamoyl phosphate and aspartate to form carbamoyl aspartate and inorganic phosphate, the committed step in the de novo pyrimidine nucleotide biosynthesis pathway. This Psychrobacter arcticus (strain DSM 17307 / VKM B-2377 / 273-4) protein is Aspartate carbamoyltransferase catalytic subunit.